A 446-amino-acid chain; its full sequence is tRNA-2-methylthio-N(6)-dimethylallyladenosine synthase (446 aa).

The MTTase N-terminal domain occupies 5-121 (RRFYIQTFGC…LPSLIDDAAS (117 aa)). Residues Cys14, Cys50, Cys84, Cys157, Cys161, and Cys164 each coordinate [4Fe-4S] cluster. The region spanning 143-373 (REGRISAFIP…IDLQQEISAE (231 aa)) is the Radical SAM core domain. A TRAM domain is found at 376 to 439 (RRQVGTVAEV…SATLSGSREG (64 aa)).

It belongs to the methylthiotransferase family. MiaB subfamily. In terms of assembly, monomer. [4Fe-4S] cluster serves as cofactor.

It is found in the cytoplasm. It carries out the reaction N(6)-dimethylallyladenosine(37) in tRNA + (sulfur carrier)-SH + AH2 + 2 S-adenosyl-L-methionine = 2-methylsulfanyl-N(6)-dimethylallyladenosine(37) in tRNA + (sulfur carrier)-H + 5'-deoxyadenosine + L-methionine + A + S-adenosyl-L-homocysteine + 2 H(+). Its function is as follows. Catalyzes the methylthiolation of N6-(dimethylallyl)adenosine (i(6)A), leading to the formation of 2-methylthio-N6-(dimethylallyl)adenosine (ms(2)i(6)A) at position 37 in tRNAs that read codons beginning with uridine. This is tRNA-2-methylthio-N(6)-dimethylallyladenosine synthase from Chlorobium luteolum (strain DSM 273 / BCRC 81028 / 2530) (Pelodictyon luteolum).